An 806-amino-acid chain; its full sequence is Phosphatidylinositol 4-kinase beta (806 aa).

Residues 55-247 (LDKVKLIRGS…GTKLRKLILS (193 aa)) form the PIK helical domain. Disordered stretches follow at residues 69-104 (LDKI…SASR) and 253-310 (AHKK…DEPV). Positions 283 to 302 (DATVSISLSSNLKRTSSNPK) are enriched in polar residues. In terms of domain architecture, PI3K/PI4K catalytic spans 525-791 (EPWQEKVRRI…MVDGSMRSIT (267 aa)). A G-loop region spans residues 531-537 (VRRIREG). The tract at residues 658 to 666 (QVKDRHNGN) is catalytic loop. The segment at 677-701 (HIDFGFILSSSPRNLGFETSAFKLT) is activation loop.

The protein belongs to the PI3/PI4-kinase family. Type III PI4K subfamily. Mg(2+) serves as cofactor. Requires Mn(2+) as cofactor.

It is found in the endomembrane system. It localises to the mitochondrion outer membrane. Its subcellular location is the rough endoplasmic reticulum membrane. The enzyme catalyses a 1,2-diacyl-sn-glycero-3-phospho-(1D-myo-inositol) + ATP = a 1,2-diacyl-sn-glycero-3-phospho-(1D-myo-inositol 4-phosphate) + ADP + H(+). In terms of biological role, phosphorylates phosphatidylinositol (PI) in the first committed step in the production of the second messenger inositol-1,4,5,-trisphosphate (PIP). May play an important role in the inner ear development. This is Phosphatidylinositol 4-kinase beta (pi4kb) from Xenopus tropicalis (Western clawed frog).